The chain runs to 202 residues: Nucleoside triphosphate pyrophosphatase (202 aa).

The Proton acceptor role is filled by Asp-79.

The protein belongs to the Maf family. It depends on a divalent metal cation as a cofactor.

Its subcellular location is the cytoplasm. The enzyme catalyses a ribonucleoside 5'-triphosphate + H2O = a ribonucleoside 5'-phosphate + diphosphate + H(+). The catalysed reaction is a 2'-deoxyribonucleoside 5'-triphosphate + H2O = a 2'-deoxyribonucleoside 5'-phosphate + diphosphate + H(+). Nucleoside triphosphate pyrophosphatase. May have a dual role in cell division arrest and in preventing the incorporation of modified nucleotides into cellular nucleic acids. The polypeptide is Nucleoside triphosphate pyrophosphatase (Rhodospirillum rubrum (strain ATCC 11170 / ATH 1.1.1 / DSM 467 / LMG 4362 / NCIMB 8255 / S1)).